Reading from the N-terminus, the 270-residue chain is F-actin-capping protein subunit beta (270 aa).

The protein belongs to the F-actin-capping protein beta subunit family. Component of the F-actin capping complex, composed of a heterodimer of an alpha and a beta subunit.

It is found in the cytoplasm. The protein localises to the cytoskeleton. Functionally, F-actin-capping proteins bind in a Ca(2+)-independent manner to the fast growing ends of actin filaments (barbed end) thereby blocking the exchange of subunits at these ends. Unlike other capping proteins (such as gelsolin and severin), these proteins do not sever actin filaments. The polypeptide is F-actin-capping protein subunit beta (cap-2) (Caenorhabditis elegans).